Consider the following 235-residue polypeptide: Uracil-DNA glycosylase (235 aa).

The Proton acceptor role is filled by Asp-71.

It belongs to the uracil-DNA glycosylase (UDG) superfamily. UNG family.

It localises to the cytoplasm. It carries out the reaction Hydrolyzes single-stranded DNA or mismatched double-stranded DNA and polynucleotides, releasing free uracil.. In terms of biological role, excises uracil residues from the DNA which can arise as a result of misincorporation of dUMP residues by DNA polymerase or due to deamination of cytosine. The protein is Uracil-DNA glycosylase of Helicobacter hepaticus (strain ATCC 51449 / 3B1).